A 376-amino-acid chain; its full sequence is PqqA peptide cyclase (376 aa).

Residues 7 to 222 form the Radical SAM core domain; sequence VGLPLWLLAE…TNEYRDKLKA (216 aa). Residues C21, C25, and C28 each coordinate [4Fe-4S] cluster.

The protein belongs to the radical SAM superfamily. PqqE family. In terms of assembly, interacts with PqqD. The interaction is necessary for activity of PqqE. The cofactor is [4Fe-4S] cluster.

It carries out the reaction [PQQ precursor protein] + S-adenosyl-L-methionine = E-Y cross-linked-[PQQ precursor protein] + 5'-deoxyadenosine + L-methionine + H(+). The protein operates within cofactor biosynthesis; pyrroloquinoline quinone biosynthesis. Functionally, catalyzes the cross-linking of a glutamate residue and a tyrosine residue in the PqqA protein as part of the biosynthesis of pyrroloquinoline quinone (PQQ). The sequence is that of PqqA peptide cyclase from Pseudomonas putida (strain ATCC 700007 / DSM 6899 / JCM 31910 / BCRC 17059 / LMG 24140 / F1).